Consider the following 348-residue polypeptide: Phosphoribosylformylglycinamidine cyclo-ligase (348 aa).

The protein belongs to the AIR synthase family.

The protein localises to the cytoplasm. It carries out the reaction 2-formamido-N(1)-(5-O-phospho-beta-D-ribosyl)acetamidine + ATP = 5-amino-1-(5-phospho-beta-D-ribosyl)imidazole + ADP + phosphate + H(+). It functions in the pathway purine metabolism; IMP biosynthesis via de novo pathway; 5-amino-1-(5-phospho-D-ribosyl)imidazole from N(2)-formyl-N(1)-(5-phospho-D-ribosyl)glycinamide: step 2/2. The polypeptide is Phosphoribosylformylglycinamidine cyclo-ligase (Geotalea uraniireducens (strain Rf4) (Geobacter uraniireducens)).